The primary structure comprises 140 residues: MVRKKLWVMQNKAIFYCGTNGSGKSTLRSFNQDAVQIVIDSDHIAMQINPQNPRLADIDAGRKAIGLFHFAIKQHIGFPMESTLSGNSIIQRMKTAKENGFYVHLNYIGINRVEINLARIKARVKSGGHFIAEDIVKYRY.

Residue 18–25 coordinates ATP; it reads GTNGSGKS.

This is an uncharacterized protein from Haemophilus influenzae (strain ATCC 51907 / DSM 11121 / KW20 / Rd).